A 31-amino-acid polypeptide reads, in one-letter code: GDLPICGETCFEGGNCRIPGCTCVWPFCSKN.

Residues 1–31 constitute a cross-link (cyclopeptide (Gly-Asn)); the sequence is GDLPICGETCFEGGNCRIPGCTCVWPFCSKN. Disulfide bonds link Cys-6/Cys-21, Cys-10/Cys-23, and Cys-16/Cys-28.

This is a cyclic peptide.

Its function is as follows. Probably participates in a plant defense mechanism. The polypeptide is Cyclotide glopa C (Gloeospermum pauciflorum).